Here is a 628-residue protein sequence, read N- to C-terminus: EIN3-binding F-box protein 1 (628 aa).

Residues 61 to 109 (PVSIDVLPDECLFEIFRRLSGPQERSACAFVSKQWLTLVSSIRQKEIDV) form the F-box domain.

As to quaternary structure, part of a SCF (SKP1-cullin-F-box) protein ligase complex. Interacts with CUL1, SKP1A/ASK1, SKP1B/ASK2, ASK11, ASK12, ASK13, ASK18, EIN3, and EIL1. As to expression, ubiquitous.

The protein localises to the nucleus. The protein operates within protein modification; protein ubiquitination. In terms of biological role, component of SCF(EBF1) E3 ubiquitin ligase complexes, which may mediate the ubiquitination and subsequent proteasomal degradation of target proteins (probably including EIN3 and EIL1). Regulator of the ethylene signaling cascade by modulating the stability of EIN3 and EIL1 proteins. Confers insensitivity to ethylene. The sequence is that of EIN3-binding F-box protein 1 (EBF1) from Arabidopsis thaliana (Mouse-ear cress).